The chain runs to 351 residues: UDP-3-O-acylglucosamine N-acyltransferase (351 aa).

Catalysis depends on histidine 240, which acts as the Proton acceptor.

This sequence belongs to the transferase hexapeptide repeat family. LpxD subfamily. In terms of assembly, homotrimer.

The enzyme catalyses a UDP-3-O-[(3R)-3-hydroxyacyl]-alpha-D-glucosamine + a (3R)-hydroxyacyl-[ACP] = a UDP-2-N,3-O-bis[(3R)-3-hydroxyacyl]-alpha-D-glucosamine + holo-[ACP] + H(+). The protein operates within bacterial outer membrane biogenesis; LPS lipid A biosynthesis. Its function is as follows. Catalyzes the N-acylation of UDP-3-O-acylglucosamine using 3-hydroxyacyl-ACP as the acyl donor. Is involved in the biosynthesis of lipid A, a phosphorylated glycolipid that anchors the lipopolysaccharide to the outer membrane of the cell. In Pseudomonas savastanoi pv. phaseolicola (strain 1448A / Race 6) (Pseudomonas syringae pv. phaseolicola (strain 1448A / Race 6)), this protein is UDP-3-O-acylglucosamine N-acyltransferase.